The chain runs to 300 residues: MGTEGKAGRKLLFLFTSMILGSLVQGKGSVYTAQSDVQVPENESIKLTCTYSGFSSPRVEWKFVQGSTTALVCYNSQITAPYADRVTFSSSGITFSSVTRKDNGEYTCMVSEEGGQNYGEVSIHLTVLVPPSKPTISVPSSVTIGNRAVLTCSEHDGSPPSEYSWFKDGISMLTADAKKTRAFMNSSFTIDPKSGDLIFDPVTAFDSGEYYCQAQNGYGTAMRSEAAHMDAVELNVGGIVAAVLVTLILLGLLIFGVWFAYSRGYFERTKKGTAPGKKVIYSQPSTRSEGEFKQTSSFLV.

The N-terminal stretch at 1–26 (MGTEGKAGRKLLFLFTSMILGSLVQG) is a signal peptide. The Extracellular portion of the chain corresponds to 27–238 (KGSVYTAQSD…MDAVELNVGG (212 aa)). Ig-like V-type domains lie at 28–122 (GSVY…GEVS) and 134–230 (PTIS…AHMD). The N-linked (GlcNAc...) asparagine glycan is linked to Asn-42. 2 disulfide bridges follow: Cys-49–Cys-108 and Cys-152–Cys-212. An N-linked (GlcNAc...) asparagine glycan is attached at Asn-185. Residues 239–259 (IVAAVLVTLILLGLLIFGVWF) traverse the membrane as a helical segment. Over 260-299 (AYSRGYFERTKKGTAPGKKVIYSQPSTRSEGEFKQTSSFL) the chain is Cytoplasmic. Phosphoserine occurs at positions 282, 285, and 288.

Belongs to the immunoglobulin superfamily. In terms of assembly, interacts with the ninth PDZ domain of MPDZ. Interacts with the first PDZ domain of PARD3. The association between PARD3 and PARD6B probably disrupts this interaction. Interacts with ITGAL (via I-domain). Interacts with CD151.

It is found in the cell junction. The protein resides in the tight junction. The protein localises to the cell membrane. In terms of biological role, seems to play a role in epithelial tight junction formation. Appears early in primordial forms of cell junctions and recruits PARD3. The association of the PARD6-PARD3 complex may prevent the interaction of PARD3 with JAM1, thereby preventing tight junction assembly. Plays a role in regulating monocyte transmigration involved in integrity of epithelial barrier. Ligand for integrin alpha-L/beta-2 involved in memory T-cell and neutrophil transmigration. Involved in platelet activation. The chain is Junctional adhesion molecule A (F11r) from Mus musculus (Mouse).